The chain runs to 583 residues: COP9 signalosome complex subunit 10 (583 aa).

The segment covering 1 to 35 (MSDEEDYAEYMMSEEDMSSFEMDVDSDVEPDDAGL) has biased composition (acidic residues). The segment at 1–55 (MSDEEDYAEYMMSEEDMSSFEMDVDSDVEPDDAGLEQDQQVTGDDYDGSAGNSGD) is disordered. In terms of domain architecture, PCI spans 297–485 (DHYNQSQMLS…DYVYFGEEYF (189 aa)).

As to quaternary structure, component of a COP9 signalosome-like (CSN) complex.

Its subcellular location is the cytoplasm. The protein localises to the nucleus. Its function is as follows. Component of the COP9 signalosome (CSN) complex that acts as an regulator of the ubiquitin (Ubl) conjugation pathway by mediating the deneddylation of the cullin subunit of SCF-type E3 ubiquitin-protein ligase complexes. The CSN complex is involved in the regulation of the mating pheromone response. The protein is COP9 signalosome complex subunit 10 (RRI2) of Kluyveromyces lactis (strain ATCC 8585 / CBS 2359 / DSM 70799 / NBRC 1267 / NRRL Y-1140 / WM37) (Yeast).